The chain runs to 149 residues: Glycophorin-A (149 aa).

Residues 1–19 form the signal peptide; that stretch reads MYGKIIFVLLLSAIVSISA. Residues 20 to 90 lie on the Extracellular side of the membrane; the sequence is SSTTEVAMHT…QLVHRFSEPE (71 aa). Ser-21 carries an O-linked (GalNAc...) serine glycan. Thr-22, Thr-23, and Thr-29 each carry an O-linked (GalNAc...) threonine glycan. O-linked (GalNAc...) serine glycosylation is present at Ser-30. A glycan (O-linked (GalNAc...) threonine) is linked at Thr-31. An O-linked (GalNAc...) serine glycan is attached at Ser-32. An O-linked (GalNAc...) threonine glycan is attached at Thr-35. O-linked (GalNAc...) serine glycosylation is found at Ser-37 and Ser-40. An O-linked (GalNAc...) threonine glycan is attached at Thr-43. The O-linked (GalNAc...) serine glycan is linked to Ser-44. O-linked (GalNAc...) threonine glycosylation is found at Thr-51 and Thr-55. An O-linked (GalNAc...) serine glycan is attached at Ser-62. O-linked (GalNAc...) threonine glycosylation occurs at Thr-68. Residues 91–113 form a helical membrane-spanning segment; it reads ITLIIFGVMAGVIGTILLIYYSI. Residues 114-149 are Cytoplasmic-facing; it reads RRLIKKSPSDVKPLPSPDTDVPLSSVEIENPETSDQ. Residues 122–149 form a disordered region; it reads SDVKPLPSPDTDVPLSSVEIENPETSDQ. Phosphoserine occurs at positions 137 and 147.

It belongs to the glycophorin-A family. Homodimer. Component of the ankyrin-1 complex in the erythrocyte, composed of ANK1, RHCE, RHAG, SLC4A1, EPB42, GYPA, GYPB and AQP1. Interacts with SLC4A1; a GYPA monomer is bound at each end of the SLC4A1 dimer forming a heterotetramer.

The protein localises to the cell membrane. Functionally, component of the ankyrin-1 complex, a multiprotein complex involved in the stability and shape of the erythrocyte membrane. Glycophorin A is the major intrinsic membrane protein of the erythrocyte. The N-terminal glycosylated segment, which lies outside the erythrocyte membrane, has MN blood group receptors. Appears to be important for the function of SLC4A1 and is required for high activity of SLC4A1. May be involved in translocation of SLC4A1 to the plasma membrane. The sequence is that of Glycophorin-A from Pan troglodytes (Chimpanzee).